A 41-amino-acid polypeptide reads, in one-letter code: Iota-conotoxin-like r11d (41 aa).

4 disulfide bridges follow: Cys-2–Cys-16, Cys-9–Cys-19, Cys-15–Cys-24, and Cys-18–Cys-35. A 4-hydroxyproline modification is found at Pro-8. Pro-26 is subject to 4-hydroxyproline.

Position 41 corresponds to a L-threonine, and not a D-threonine as firstly supposed. In terms of tissue distribution, expressed by the venom duct.

It is found in the secreted. Functionally, iota-conotoxins bind to voltage-gated sodium channels (Nav) and act as agonists by shifting the voltage-dependence of activation to more hyperpolarized levels. Both natural (L-Thr form) and synthetic (D-Thr form) peptides cause paralysis and death following intracranial injection and grooming and hypersensitivity upon intraperitoneal injection into mice. The L-Thr form of the peptide is 7-fold more potent than the D-Thr form. Both natural peptide (L-Thr form) and synthetic peptide (D-Thr form) are active on nerve, and on muscle. The polypeptide is Iota-conotoxin-like r11d (Conus radiatus (Rayed cone)).